Here is a 400-residue protein sequence, read N- to C-terminus: Elongation factor Tu (400 aa).

The region spanning 10–208 (KPHLNVGTIG…TMDSYFPEPQ (199 aa)) is the tr-type G domain. Positions 19-26 (GHIDHGKT) are G1. 19 to 26 (GHIDHGKT) is a binding site for GTP. Thr-26 is a Mg(2+) binding site. Positions 60–64 (GITIN) are G2. The tract at residues 81 to 84 (DCPG) is G3. Residues 81-85 (DCPGH) and 136-139 (NKTD) each bind GTP. The G4 stretch occupies residues 136-139 (NKTD). The tract at residues 174-176 (SAL) is G5.

It belongs to the TRAFAC class translation factor GTPase superfamily. Classic translation factor GTPase family. EF-Tu/EF-1A subfamily. Monomer.

The protein resides in the cytoplasm. The catalysed reaction is GTP + H2O = GDP + phosphate + H(+). Its function is as follows. GTP hydrolase that promotes the GTP-dependent binding of aminoacyl-tRNA to the A-site of ribosomes during protein biosynthesis. The protein is Elongation factor Tu of Thermosipho africanus (strain TCF52B).